Here is a 431-residue protein sequence, read N- to C-terminus: POU domain, class 2, transcription factor 3 (431 aa).

Disordered stretches follow at residues 1 to 39 (MVNL…RNGL), 130 to 180 (LLPQ…EPTD), and 248 to 267 (DAES…YPTL). The POU-specific domain maps to 176 to 250 (DEPTDLEELE…LLEKWLNDAE (75 aa)). The segment covering 251-267 (SSPSDPSASTPSSYPTL) has biased composition (low complexity). The homeobox DNA-binding region spans 274–333 (KRKKRTSIETNIRLTLEKRFQDNPKPSSEEISMIAEQLSMEKEVVRVWFCNRRQKEKRIN). Composition is skewed to low complexity over residues 352–364 (PSGS…VPPV), 374–390 (SSCS…PGSG), and 398–419 (ASQN…NSSG). The tract at residues 352 to 419 (PSGSLGPLSV…SSSSSFNSSG (68 aa)) is disordered.

The protein belongs to the POU transcription factor family. Class-2 subfamily. In terms of assembly, interacts (via the POU domain) with POU2AF1 and POU2AF2 in a DNA-dependent manner; this interaction recruits POU2AF2 to chromatin and increases POU2F3 transactivation activity. Skin, thymus, stomach and testis.

It localises to the nucleus. In terms of biological role, transcription factor that binds to the octamer motif (5'-ATTTGCAT-3'). Regulates cell type-specific differentiation pathways. Involved in the regulation of keratinocytes differentiation. The POU2F3-POU2AF2/POU2AF3 complex drives the expression of tuft-cell-specific genes, a rare chemosensory cells that coordinate immune and neural functions within mucosal epithelial tissues. This Mus musculus (Mouse) protein is POU domain, class 2, transcription factor 3 (Pou2f3).